Consider the following 779-residue polypeptide: Pleckstrin homology domain-containing family A member 4 (779 aa).

Positions 54–153 constitute a PH domain; it reads PVHIRGWLHK…WLRALGRASR (100 aa). Disordered regions lie at residues 152 to 352, 492 to 670, and 691 to 764; these read SRAE…LPGP, AGLG…EGHR, and MTGG…LPQD. Position 164 is a phosphoserine (Ser164). A compositionally biased stretch (basic and acidic residues) spans 184–193; sequence SRGEEGRISE. Residues 315-332 are compositionally biased toward polar residues; sequence QHWSQEPRTQAHSGSPTY. A compositionally biased stretch (low complexity) spans 525 to 535; it reads PESLELSSPRS. The segment covering 536–551 has biased composition (basic and acidic residues); the sequence is PETDWGRPPGGDKDLA. Ser559 is modified (phosphoserine). A compositionally biased stretch (basic and acidic residues) spans 594–603; it reads QLERMRRNQE. Residues 647-663 are compositionally biased toward polar residues; it reads LRSSGSWSSPRNTTPYL. Pro residues predominate over residues 704-724; that stretch reads PGVPLPPSDPTRQETPPPRSP.

As to expression, highly expressed in melanoma. Detected at low levels in heart, skeletal muscle, kidney, liver and small intestine.

It localises to the cytoplasm. The protein resides in the membrane. Functionally, binds specifically to phosphatidylinositol 3-phosphate (PtdIns3P), but not to other phosphoinositides. The sequence is that of Pleckstrin homology domain-containing family A member 4 (PLEKHA4) from Homo sapiens (Human).